The chain runs to 145 residues: D-aminoacyl-tRNA deacylase (145 aa).

A Gly-cisPro motif, important for rejection of L-amino acids motif is present at residues Gly-137–Pro-138.

It belongs to the DTD family. In terms of assembly, homodimer.

The protein localises to the cytoplasm. The catalysed reaction is glycyl-tRNA(Ala) + H2O = tRNA(Ala) + glycine + H(+). It carries out the reaction a D-aminoacyl-tRNA + H2O = a tRNA + a D-alpha-amino acid + H(+). An aminoacyl-tRNA editing enzyme that deacylates mischarged D-aminoacyl-tRNAs. Also deacylates mischarged glycyl-tRNA(Ala), protecting cells against glycine mischarging by AlaRS. Acts via tRNA-based rather than protein-based catalysis; rejects L-amino acids rather than detecting D-amino acids in the active site. By recycling D-aminoacyl-tRNA to D-amino acids and free tRNA molecules, this enzyme counteracts the toxicity associated with the formation of D-aminoacyl-tRNA entities in vivo and helps enforce protein L-homochirality. This chain is D-aminoacyl-tRNA deacylase, found in Legionella pneumophila (strain Lens).